Consider the following 757-residue polypeptide: Elongation factor G, mitochondrial (757 aa).

The region spanning 66-344 (DRMRNIGISA…VLDYLPCPME (279 aa)) is the tr-type G domain. GTP contacts are provided by residues 75 to 82 (AHIDSGKT), 142 to 146 (DTPGH), and 196 to 199 (NKLD).

The protein belongs to the TRAFAC class translation factor GTPase superfamily. Classic translation factor GTPase family. EF-G/EF-2 subfamily.

Its subcellular location is the mitochondrion. The protein operates within protein biosynthesis; polypeptide chain elongation. Functionally, mitochondrial GTPase that catalyzes the GTP-dependent ribosomal translocation step during translation elongation. During this step, the ribosome changes from the pre-translocational (PRE) to the post-translocational (POST) state as the newly formed A-site-bound peptidyl-tRNA and P-site-bound deacylated tRNA move to the P and E sites, respectively. Catalyzes the coordinated movement of the two tRNA molecules, the mRNA and conformational changes in the ribosome. This Oryza sativa subsp. japonica (Rice) protein is Elongation factor G, mitochondrial.